The chain runs to 118 residues: Large ribosomal subunit protein bL20 (118 aa).

Belongs to the bacterial ribosomal protein bL20 family.

In terms of biological role, binds directly to 23S ribosomal RNA and is necessary for the in vitro assembly process of the 50S ribosomal subunit. It is not involved in the protein synthesizing functions of that subunit. In Campylobacter curvus (strain 525.92), this protein is Large ribosomal subunit protein bL20.